We begin with the raw amino-acid sequence, 263 residues long: Hydroxyethylthiazole kinase (263 aa).

M39 is a binding site for substrate. Residues K115 and T160 each contribute to the ATP site. Residue G187 coordinates substrate.

The protein belongs to the Thz kinase family. The cofactor is Mg(2+).

The catalysed reaction is 5-(2-hydroxyethyl)-4-methylthiazole + ATP = 4-methyl-5-(2-phosphooxyethyl)-thiazole + ADP + H(+). It functions in the pathway cofactor biosynthesis; thiamine diphosphate biosynthesis; 4-methyl-5-(2-phosphoethyl)-thiazole from 5-(2-hydroxyethyl)-4-methylthiazole: step 1/1. Catalyzes the phosphorylation of the hydroxyl group of 4-methyl-5-beta-hydroxyethylthiazole (THZ). The polypeptide is Hydroxyethylthiazole kinase (Staphylococcus aureus (strain COL)).